The chain runs to 343 residues: Nuclear distribution protein nudE-like 1 (343 aa).

A coiled-coil region spans residues 25-190; it reads KYKQSFQEAR…LAVRERQQEV (166 aa). Disordered regions lie at residues 184–204 and 322–343; these read RERQ…LDCE and QGTP…PLSV.

This sequence belongs to the nudE family. Phosphorylated in mitosis.

It is found in the cytoplasm. Its subcellular location is the cytoskeleton. The protein resides in the microtubule organizing center. The protein localises to the centrosome. It localises to the spindle. In terms of biological role, required for organization of the cellular microtubule array and microtubule anchoring at the centrosome. Positively regulates the activity of the minus-end directed microtubule motor protein dynein. May enhance dynein-mediated microtubule sliding by targeting dynein to the microtubule plus end. Positively regulates lysosome peripheral distribution and ruffled border formation in osteoclasts. The protein is Nuclear distribution protein nudE-like 1 (NDEL1) of Gallus gallus (Chicken).